Here is a 258-residue protein sequence, read N- to C-terminus: Small ribosomal subunit protein mS23 (258 aa).

The protein belongs to the mitochondrion-specific ribosomal protein mS23 family. As to quaternary structure, component of the mitochondrial small ribosomal subunit.

The protein resides in the mitochondrion. The polypeptide is Small ribosomal subunit protein mS23 (Aspergillus fumigatus (strain CBS 144.89 / FGSC A1163 / CEA10) (Neosartorya fumigata)).